The primary structure comprises 161 residues: Long arms of the bivalent protein 1 (161 aa).

The PP1 binding motif signature appears at 72-75 (KVIW). Residues 85 to 161 (GTMFEDFKED…SDKTMCSGQS (77 aa)) are disordered. Residues 97–115 (QESVSSISNNEANWGSSVN) are compositionally biased toward polar residues. Over residues 120 to 129 (NYEKMQKEET) the composition is skewed to basic and acidic residues. The span at 130–151 (FDPYDSDSDTSEDSDFDEDFED) shows a compositional bias: acidic residues.

In terms of assembly, interacts with gsp-1 and gsp-2; the interaction is direct.

It is found in the chromosome. The protein resides in the nucleus. In terms of biological role, involved in sister chromatid cohesion during mitosis and meiosis. In association with the gsp-2 phosphatase, it both restricts the localization and antagonizes the function of the air-2 kinase during meiosis I and mitosis to promote chromatid cohesion and spindle attachment. This in turn, drives germ cell immortality. Furthermore, may play a role in ensuring the timely assembly of the synaptonemal complex during prophase I of meiosis. In Caenorhabditis elegans, this protein is Long arms of the bivalent protein 1.